Consider the following 133-residue polypeptide: ATP synthase epsilon chain, chloroplastic (133 aa).

Belongs to the ATPase epsilon chain family. F-type ATPases have 2 components, CF(1) - the catalytic core - and CF(0) - the membrane proton channel. CF(1) has five subunits: alpha(3), beta(3), gamma(1), delta(1), epsilon(1). CF(0) has three main subunits: a, b and c.

It is found in the plastid. Its subcellular location is the chloroplast thylakoid membrane. Produces ATP from ADP in the presence of a proton gradient across the membrane. The sequence is that of ATP synthase epsilon chain, chloroplastic from Daucus carota (Wild carrot).